A 450-amino-acid chain; its full sequence is 3-keto-steroid reductase erg27 (450 aa).

3 residues coordinate NADP(+): Leu-25, Thr-53, and Lys-59. Residues Ser-215 and Tyr-238 each act as proton donor in the active site. Residues Tyr-238, Lys-242, and Thr-296 each contribute to the NADP(+) site. Lys-242 serves as the catalytic Lowers pKa of active site Tyr.

It belongs to the short-chain dehydrogenases/reductases (SDR) family. ERG27 subfamily. As to quaternary structure, heterotetramer of erg25, erg26, erg27 and erg28. Erg28 acts as a scaffold to tether erg27 and other 4,4-demethylation-related enzymes, forming a demethylation enzyme complex, in the endoplasmic reticulum.

Its subcellular location is the endoplasmic reticulum membrane. It localises to the lipid droplet. It functions in the pathway steroid metabolism; ergosterol biosynthesis. Functionally, sterol-C4-methyl oxidase; part of the third module of ergosterol biosynthesis pathway that includes the late steps of the pathway. Erg27 is a catalytic component of the C-4 demethylation complex that catalyzes the conversion of 4,4-dimethylfecosterol into fecosterol via 4-methylfecosterol. The third module or late pathway involves the ergosterol synthesis itself through consecutive reactions that mainly occur in the endoplasmic reticulum (ER) membrane. Firstly, the squalene synthase erg9 catalyzes the condensation of 2 farnesyl pyrophosphate moieties to form squalene, which is the precursor of all steroids. Squalene synthase is crucial for balancing the incorporation of farnesyl diphosphate (FPP) into sterol and nonsterol isoprene synthesis. Secondly, squalene is converted into lanosterol by the consecutive action of the squalene epoxidase erg1 and the lanosterol synthase erg7. Then, the delta(24)-sterol C-methyltransferase erg6 methylates lanosterol at C-24 to produce eburicol. Eburicol is the substrate of the sterol 14-alpha demethylase encoded by cyp51A and cyp51B, to yield 4,4,24-trimethyl ergosta-8,14,24(28)-trienol. The C-14 reductase erg24 then reduces the C14=C15 double bond which leads to 4,4-dimethylfecosterol. A sequence of further demethylations at C-4, involving the C-4 demethylation complex containing the C-4 methylsterol oxidases erg25A or erg25B, the sterol-4-alpha-carboxylate 3-dehydrogenase erg26 and the 3-keto-steroid reductase erg27, leads to the production of fecosterol via 4-methylfecosterol. The C-8 sterol isomerase erg2 then catalyzes the reaction which results in unsaturation at C-7 in the B ring of sterols and thus converts fecosterol to episterol. The sterol-C5-desaturase erg3B then catalyzes the introduction of a C-5 double bond in the B ring to produce 5-dehydroepisterol. The 2 other sterol-C5-desaturases, erg3A and erg3C, seem to be less important in ergosterol biosynthesis. The C-22 sterol desaturase erg5 further converts 5-dehydroepisterol into ergosta-5,7,22,24(28)-tetraen-3beta-ol by forming the C-22(23) double bond in the sterol side chain. Finally, ergosta-5,7,22,24(28)-tetraen-3beta-ol is substrate of the C-24(28) sterol reductases erg4A and erg4B to produce ergosterol. Possible alternative sterol biosynthetic pathways might exist from fecosterol to ergosterol, depending on the activities of the erg3 isoforms. The chain is 3-keto-steroid reductase erg27 from Aspergillus fumigatus (strain ATCC MYA-4609 / CBS 101355 / FGSC A1100 / Af293) (Neosartorya fumigata).